The chain runs to 551 residues: MADGVDHIDIYADVGEEFNQEAEYGGHDQIDLYDDVISPSANNGDAPEDRDYMDTLPPTVGDDVGKGAAPNVVYTYTGKRIALYIGNLTWWTTDEDLTEAVHSLGVNDILEIKFFENRANGQSKGFALVGVGSEASSKKLMDLLPKRELHGQNPVVTPCNKQFLSQFEMQSRKTTQSGQMSGEGKAGPPGGSSRAAFPQGGRGRGRFPGAVPGGDRFPGPAGPGGPPPPFPAGQTPPRPPLCPPGPPGPPGPPPPGQVLPPPLAGPPNRGDRPPPPVLFPGQPFGQPPLGPLPPGPPPPVPGYGPPPGPPPPQQGPPPPPGPFPPRPPGPLGPPLTLAPPPHLPGPPPGAPPPAPHVNPAFFPPPTNSGMPTSDSRGPPPTDPYGRPPPYDRGDYGPPGREMDTARTPLSEAEFEEIMNRNRAISSSAISRAVSDASAGDYGSAIETLVTAISLIKQSKVSADDRCKVLISSLQDCLHGIESKSYGSGSRRERSRERDHSRSREKSRRHKSRSRDRHDDYYRERSRERERHRDRDRDRDRERDREREYRHR.

The segment at 1–213 (MADGVDHIDI…RGRFPGAVPG (213 aa)) is necessary for interaction with NXF1. The 81-residue stretch at 81–161 (IALYIGNLTW…QNPVVTPCNK (81 aa)) folds into the RRM domain. Residues 81 to 161 (IALYIGNLTW…QNPVVTPCNK (81 aa)) form a necessary for interaction with NUDT21/CPSF5 region. Residues 81 to 161 (IALYIGNLTW…QNPVVTPCNK (81 aa)) are necessary for nuclear paraspeckles localization. T157 carries the phosphothreonine modification. Over residues 169 to 180 (MQSRKTTQSGQM) the composition is skewed to polar residues. Disordered stretches follow at residues 169-411 (MQSR…PLSE) and 477-551 (LHGI…YRHR). The GAR signature appears at 202 to 206 (RGRGR). Positions 207–219 (FPGAVPGGDRFPG) are enriched in low complexity. Pro residues-rich tracts occupy residues 220–265 (PAGP…PLAG), 285–366 (GQPP…PPPT), and 377–388 (GPPPTDPYGRPP). A compositionally biased stretch (basic and acidic residues) spans 389–404 (PYDRGDYGPPGREMDT). Residues T404 and T407 each carry the phosphothreonine modification. A sufficient for nuclear speckle localization region spans residues 404 to 551 (TARTPLSEAE…RDREREYRHR (148 aa)). The segment at 405–551 (ARTPLSEAEF…RDREREYRHR (147 aa)) is necessary for RNA-binding. The necessary for interaction with SRSF3, SRSF7 and TRA2B/SFRS10 stretch occupies residues 481 to 551 (ESKSYGSGSR…RDREREYRHR (71 aa)). Residues 489 to 503 (SRRERSRERDHSRSR) are compositionally biased toward basic and acidic residues. Residues 490–551 (RRERSRERDH…RDREREYRHR (62 aa)) are arg/Ser-rich domain. 5 positions are modified to phosphoserine: S494, S500, S511, S513, and S525. The segment covering 504 to 514 (EKSRRHKSRSR) has biased composition (basic residues). Positions 510-551 (KSRSRDRHDDYYRERSRERERHRDRDRDRDRERDREREYRHR) are sufficient for nuclear targeting. Residues 515-551 (DRHDDYYRERSRERERHRDRDRDRDRERDREREYRHR) show a composition bias toward basic and acidic residues.

The protein belongs to the RRM CPSF6/7 family. Component of the cleavage factor Im (CFIm) complex which is a heterotetramer composed of two subunits of NUDT21/CPSF5 and two subunits of CPSF6 or CPSF7 or a heterodimer of CPSF6 and CPSF7. The cleavage factor Im (CFIm) complex associates with the CPSF and CSTF complexes to promote the assembly of the core mRNA 3'-processing machinery. Associates with the exon junction complex (EJC). Associates with the 80S ribosome particle. Interacts (via the RRM domain) with NUDT21/CPSF5; this interaction is direct and enhances binding to RNA. Interacts (via Arg/Ser-rich domain) with FIP1L1 (preferentially via unphosphorylated form and Arg/Glu/Asp-rich domain); this interaction mediates, at least in part, the interaction between the CFIm and CPSF complexes and may be inhibited by CPSF6 hyper-phosphorylation. Interacts (via N-terminus) with NXF1; this interaction is direct. Interacts with SRSF3. Interacts with SRSF7. Interacts with SNRNP70. Interacts with TRA2B/SFRS10. Interacts with UPF1. Interacts with UPF3B. Interacts with VIRMA. Interacts (via Arg/Ser-rich domain) with TNPO3; promoting nuclear import of CPSF6 independently of its phosphorylation status. Interacts with YTHDC1. Post-translationally, phosphorylated. Phosphorylated in the Arg/Ser-rich domain by SRPK1, in vitro. Symmetrically dimethylated on arginine residues in the GAR motif by PRMT5 in a WDR77- and CLNS1A-dependent manner. Asymmetrically dimethylated on arginine residues in the GAR motif by PRMT1.

Its subcellular location is the nucleus. The protein resides in the nucleoplasm. It is found in the nucleus speckle. It localises to the cytoplasm. In terms of biological role, component of the cleavage factor Im (CFIm) complex that functions as an activator of the pre-mRNA 3'-end cleavage and polyadenylation processing required for the maturation of pre-mRNA into functional mRNAs. CFIm contributes to the recruitment of multiprotein complexes on specific sequences on the pre-mRNA 3'-end, so called cleavage and polyadenylation signals (pA signals). Most pre-mRNAs contain multiple pA signals, resulting in alternative cleavage and polyadenylation (APA) producing mRNAs with variable 3'-end formation. The CFIm complex acts as a key regulator of cleavage and polyadenylation site choice during APA through its binding to 5'-UGUA-3' elements localized in the 3'-untranslated region (UTR) for a huge number of pre-mRNAs. CPSF6 enhances NUDT21/CPSF5 binding to 5'-UGUA-3' elements localized upstream of pA signals and promotes RNA looping, and hence activates directly the mRNA 3'-processing machinery. Plays a role in mRNA export. In Bos taurus (Bovine), this protein is Cleavage and polyadenylation specificity factor subunit 6.